We begin with the raw amino-acid sequence, 92 residues long: Small ribosomal subunit protein uS19c (92 aa).

This sequence belongs to the universal ribosomal protein uS19 family.

It localises to the plastid. It is found in the chloroplast. Its function is as follows. Protein S19 forms a complex with S13 that binds strongly to the 16S ribosomal RNA. The sequence is that of Small ribosomal subunit protein uS19c from Adiantum capillus-veneris (Maidenhair fern).